The primary structure comprises 536 residues: ATP synthase subunit alpha, mitochondrial (536 aa).

The transit peptide at 1 to 27 directs the protein to the mitochondrion; sequence MLRQAGTRLLKVPVCGLRPSITLKRGY. Position 197 to 204 (197 to 204) interacts with ATP; that stretch reads GDRQTGKT.

The protein belongs to the ATPase alpha/beta chains family. As to quaternary structure, F-type ATPases have 2 components, CF(1) - the catalytic core - and CF(0) - the membrane proton channel. CF(1) has five subunits: alpha(3), beta(3), gamma(1), delta(1), epsilon(1). CF(0) has three main subunits: a, b and c.

Its subcellular location is the mitochondrion. It localises to the mitochondrion inner membrane. Mitochondrial membrane ATP synthase (F(1)F(0) ATP synthase or Complex V) produces ATP from ADP in the presence of a proton gradient across the membrane which is generated by electron transport complexes of the respiratory chain. F-type ATPases consist of two structural domains, F(1) - containing the extramembraneous catalytic core, and F(0) - containing the membrane proton channel, linked together by a central stalk and a peripheral stalk. During catalysis, ATP synthesis in the catalytic domain of F(1) is coupled via a rotary mechanism of the central stalk subunits to proton translocation. Subunits alpha and beta form the catalytic core in F(1). Rotation of the central stalk against the surrounding alpha(3)beta(3) subunits leads to hydrolysis of ATP in three separate catalytic sites on the beta subunits. Subunit alpha does not bear the catalytic high-affinity ATP-binding sites. This is ATP synthase subunit alpha, mitochondrial (atp1) from Schizosaccharomyces pombe (strain 972 / ATCC 24843) (Fission yeast).